The following is a 198-amino-acid chain: PEP-dependent dihydroxyacetone kinase 1, ADP-binding subunit DhaL (198 aa).

Residues 6-194 (DWALRWLNDF…SALLFHAMLQ (189 aa)) form the DhaL domain. Residues Asp-30, Asp-35, and Asp-37 each coordinate Mg(2+). ADP is bound by residues 38–41 (HGIN), 79–80 (AS), Gly-120, Met-129, Arg-166, and 179–181 (DPG).

Homodimer. The dihydroxyacetone kinase complex is composed of a homodimer of DhaM, a homodimer of DhaK and the subunit DhaL. Mg(2+) is required as a cofactor.

It is found in the cytoplasm. The enzyme catalyses dihydroxyacetone + phosphoenolpyruvate = dihydroxyacetone phosphate + pyruvate. It functions in the pathway polyol metabolism; glycerol degradation. Functionally, ADP-binding subunit of the dihydroxyacetone kinase, which is responsible for the phosphoenolpyruvate (PEP)-dependent phosphorylation of dihydroxyacetone. DhaL-ADP is converted to DhaL-ATP via a phosphoryl group transfer from DhaM and transmits it to dihydroxyacetone binds to DhaK. This is PEP-dependent dihydroxyacetone kinase 1, ADP-binding subunit DhaL from Listeria innocua serovar 6a (strain ATCC BAA-680 / CLIP 11262).